The sequence spans 315 residues: tRNA dimethylallyltransferase (315 aa).

Residue 13 to 20 (GPTASGKT) coordinates ATP. 15–20 (TASGKT) is a binding site for substrate. Interaction with substrate tRNA regions lie at residues 38–41 (DSAL), 162–166 (QRLSR), 243–248 (RCVGYR), and 276–283 (KRQITWLR).

Belongs to the IPP transferase family. In terms of assembly, monomer. Mg(2+) serves as cofactor.

It catalyses the reaction adenosine(37) in tRNA + dimethylallyl diphosphate = N(6)-dimethylallyladenosine(37) in tRNA + diphosphate. Its function is as follows. Catalyzes the transfer of a dimethylallyl group onto the adenine at position 37 in tRNAs that read codons beginning with uridine, leading to the formation of N6-(dimethylallyl)adenosine (i(6)A). The chain is tRNA dimethylallyltransferase from Vibrio vulnificus (strain CMCP6).